The following is a 171-amino-acid chain: Shikimate kinase (171 aa).

Position 11–16 (11–16) interacts with ATP; the sequence is GTGKTT. Residue threonine 15 participates in Mg(2+) binding. Residues aspartate 33, arginine 57, and glycine 79 each contribute to the substrate site. Arginine 117 serves as a coordination point for ATP. Residue arginine 136 coordinates substrate.

The protein belongs to the shikimate kinase family. As to quaternary structure, monomer. Requires Mg(2+) as cofactor.

The protein resides in the cytoplasm. It carries out the reaction shikimate + ATP = 3-phosphoshikimate + ADP + H(+). It functions in the pathway metabolic intermediate biosynthesis; chorismate biosynthesis; chorismate from D-erythrose 4-phosphate and phosphoenolpyruvate: step 5/7. In terms of biological role, catalyzes the specific phosphorylation of the 3-hydroxyl group of shikimic acid using ATP as a cosubstrate. The polypeptide is Shikimate kinase (Caldanaerobacter subterraneus subsp. tengcongensis (strain DSM 15242 / JCM 11007 / NBRC 100824 / MB4) (Thermoanaerobacter tengcongensis)).